The primary structure comprises 491 residues: Synaptotagmin-9 (491 aa).

Topologically, residues 1–52 (MPGARDALCHQALQLLAELCARGALEHDSCQDFIYHLRDRARPRLRDPDISV) are vesicular. The tract at residues 9–31 (CHQALQLLAELCARGALEHDSCQ) is cysteine motif. Residues 53 to 73 (SLLTLVVTACGLALFGVSLFV) traverse the membrane as a helical segment. The Cytoplasmic segment spans residues 74 to 491 (SWKLCWVPWR…AHWHSLMEKR (418 aa)). The span at 91-104 (SKDNNQEPLNYTDT) shows a compositional bias: polar residues. Residues 91-147 (SKDNNQEPLNYTDTETNEQENSEDFLDPPTPCPDSSMKISHTSPDIPLSTQPGGQEN) are disordered. The segment covering 105 to 116 (ETNEQENSEDFL) has biased composition (acidic residues). Positions 127–144 (MKISHTSPDIPLSTQPGG) are enriched in polar residues. Residue Ser-177 is modified to Phosphoserine. C2 domains follow at residues 220–341 (ACGK…ILWK) and 352–485 (DLGE…AHWH). The Ca(2+) site is built by Asp-251, Asp-257, Asp-309, Phe-310, Asp-311, Ser-314, Asp-317, Asp-383, Asp-389, Asp-443, and Asp-445.

The protein belongs to the synaptotagmin family. Homodimer; disulfide-linked via the cysteine motif. Can also form heterodimers with SYT3, SYT6, SYT7 and SYT10. Interacts with DNAJC5 and SNAP25, but not with HSC70. The interaction with DNAJC5 is stimulated tenfold in presence of calcium while the interaction with SNAP25 is inhibited. Ca(2+) serves as cofactor.

It is found in the cytoplasmic vesicle. It localises to the secretory vesicle. The protein localises to the synaptic vesicle membrane. Its function is as follows. May be involved in Ca(2+)-dependent exocytosis of secretory vesicles through Ca(2+) and phospholipid binding to the C2 domain or may serve as Ca(2+) sensors in the process of vesicular trafficking and exocytosis. This is Synaptotagmin-9 (Syt9) from Mus musculus (Mouse).